The following is a 102-amino-acid chain: MAGQNTMEGEAVALLMEAVVTPRAQPNNTTITAIQPSRSAEKCYYSDSENETADEFLRRIGKYQHKIYHRKKFCYITLIIVFVFAMTGAAFALGYITSQFVG.

Residues 1–75 lie on the Intravirion side of the membrane; that stretch reads MAGQNTMEGE…KIYHRKKFCY (75 aa). Residues 14 to 15 carry the Di-leucine internalization motif motif; sequence LL. The tract at residues 41-55 is acidic; sequence EKCYYSDSENETADE. Residues S46 and S48 each carry the phosphoserine; by host CK2 modification. The helical; Signal-anchor for type II membrane protein transmembrane segment at 76 to 96 threads the bilayer; sequence ITLIIVFVFAMTGAAFALGYI. The Virion surface segment spans residues 97–102; it reads TSQFVG.

This sequence belongs to the alphaherpesvirinae envelope protein US9 family. In terms of processing, phosphorylated on serines within the acidic cluster, possibly by host CK2. Phosphorylation determines whether endocytosed viral US9 traffics to the trans-Golgi network or recycles to the cell membrane.

Its subcellular location is the virion membrane. The protein resides in the host Golgi apparatus membrane. It localises to the host Golgi apparatus. It is found in the host trans-Golgi network. The protein localises to the host cell membrane. In terms of biological role, essential for the anterograde spread of the infection throughout the host nervous system. Together with the gE/gI heterodimer, US9 is involved in the sorting and transport of viral structural components toward axon tips. In Varicella-zoster virus (strain Dumas) (HHV-3), this protein is Envelope protein US9.